The following is a 210-amino-acid chain: Orotate phosphoribosyltransferase (210 aa).

Residues Arg97, Lys98, and 125-133 (NDMVSSGKS) contribute to the 5-phospho-alpha-D-ribose 1-diphosphate site. Residues Ser129 and Arg157 each contribute to the orotate site.

This sequence belongs to the purine/pyrimidine phosphoribosyltransferase family. PyrE subfamily. In terms of assembly, homodimer. Requires Mg(2+) as cofactor.

It carries out the reaction orotidine 5'-phosphate + diphosphate = orotate + 5-phospho-alpha-D-ribose 1-diphosphate. It functions in the pathway pyrimidine metabolism; UMP biosynthesis via de novo pathway; UMP from orotate: step 1/2. In terms of biological role, catalyzes the transfer of a ribosyl phosphate group from 5-phosphoribose 1-diphosphate to orotate, leading to the formation of orotidine monophosphate (OMP). The polypeptide is Orotate phosphoribosyltransferase (Chlamydia pneumoniae (Chlamydophila pneumoniae)).